The primary structure comprises 813 residues: Leucine--tRNA ligase (813 aa).

The 'HIGH' region signature appears at 42 to 52; the sequence is PYTSGNLHIGH. The 'KMSKS' region signature appears at 580-584; sequence KMSKS. An ATP-binding site is contributed by Lys583.

This sequence belongs to the class-I aminoacyl-tRNA synthetase family.

It localises to the cytoplasm. It catalyses the reaction tRNA(Leu) + L-leucine + ATP = L-leucyl-tRNA(Leu) + AMP + diphosphate. The protein is Leucine--tRNA ligase of Dehalococcoides mccartyi (strain CBDB1).